Consider the following 226-residue polypeptide: ATP-dependent Clp protease proteolytic subunit 4 (226 aa).

The active-site Nucleophile is Ser122. His147 is an active-site residue.

The protein belongs to the peptidase S14 family. In terms of assembly, fourteen ClpP subunits assemble into 2 heptameric rings which stack back to back to give a disk-like structure with a central cavity, resembling the structure of eukaryotic proteasomes.

It localises to the cytoplasm. The enzyme catalyses Hydrolysis of proteins to small peptides in the presence of ATP and magnesium. alpha-casein is the usual test substrate. In the absence of ATP, only oligopeptides shorter than five residues are hydrolyzed (such as succinyl-Leu-Tyr-|-NHMec, and Leu-Tyr-Leu-|-Tyr-Trp, in which cleavage of the -Tyr-|-Leu- and -Tyr-|-Trp bonds also occurs).. Its function is as follows. Cleaves peptides in various proteins in a process that requires ATP hydrolysis. Has a chymotrypsin-like activity. Plays a major role in the degradation of misfolded proteins. This Streptomyces avermitilis (strain ATCC 31267 / DSM 46492 / JCM 5070 / NBRC 14893 / NCIMB 12804 / NRRL 8165 / MA-4680) protein is ATP-dependent Clp protease proteolytic subunit 4.